The sequence spans 337 residues: WRKY transcription factor 23 (337 aa).

Residues 100–160 (INPPATPNSS…KNNQKRQREA (61 aa)) form a disordered region. Residues 106–118 (PNSSSISSASSEA) show a composition bias toward low complexity. Basic residues predominate over residues 142 to 155 (HTKKQLKAKKNNQK). The segment at residues 168–233 (SEVDHLEDGY…YEGQHTHISP (66 aa)) is a DNA-binding region (WRKY).

This sequence belongs to the WRKY group II-c family.

Its subcellular location is the nucleus. Its function is as follows. Transcription factor. Interacts specifically with the W box (5'-(T)TGAC[CT]-3'), a frequently occurring elicitor-responsive cis-acting element. This chain is WRKY transcription factor 23 (WRKY23), found in Arabidopsis thaliana (Mouse-ear cress).